Here is a 399-residue protein sequence, read N- to C-terminus: MLRWLTAGESHGPALVGIIEGVPAGVELTSSQIADALARRRLGYGRGARMKFEQDVVTVLGGVRHGITQGGPVAIQVGNTEWPKWEQIMAADPVAPEILADQARNAPLTRPRPGHADFTGMQKYGFDEARPVLERASARETATRVALGTVASQFLKQLGIELVSHTVSIASVSVPEGRPLPVPANVIALDADPLRCFDRETSDAMVAEVDAAHKEGETLGGVVEVLAYGLPPGLGSYVHWDRRLDSRLAAALMGIQAIKGVEVGDGFLTASRRGSAAHDEIVKDSDGRIIRTSNRAGGIEGGMSIGDVLRVRAAMKPIATVPRALKTIDVSTGEAAKAHHQRSDVCAVPAAGVVAEAMVALVLAEAVAEKFGGDSVAETARNIKGYLDNIPASLDSIGQ.

2 residues coordinate NADP(+): R40 and R46. Residues 135–137, 256–257, G301, 316–320, and R342 each bind FMN; these read RAS, QA, and KPIAT.

The protein belongs to the chorismate synthase family. Homotetramer. FMNH2 serves as cofactor.

The catalysed reaction is 5-O-(1-carboxyvinyl)-3-phosphoshikimate = chorismate + phosphate. The protein operates within metabolic intermediate biosynthesis; chorismate biosynthesis; chorismate from D-erythrose 4-phosphate and phosphoenolpyruvate: step 7/7. Its function is as follows. Catalyzes the anti-1,4-elimination of the C-3 phosphate and the C-6 proR hydrogen from 5-enolpyruvylshikimate-3-phosphate (EPSP) to yield chorismate, which is the branch point compound that serves as the starting substrate for the three terminal pathways of aromatic amino acid biosynthesis. This reaction introduces a second double bond into the aromatic ring system. This chain is Chorismate synthase, found in Arthrobacter sp. (strain FB24).